Reading from the N-terminus, the 297-residue chain is Oxidoreductase aprR (297 aa).

Belongs to the NmrA-type oxidoreductase family. Isoflavone reductase subfamily.

Its pathway is secondary metabolite biosynthesis. Functionally, oxidoreductase; part of the gene cluster that mediates the biosynthesis of the asperipin-2a, a bicyclic peptide that possesses two macrocyclic ether rings consisting of 14- and 17-membered paracyclophans. The pathway starts with the processing of the precursor aprA by kexin proteases to produce 11 identical copies of the hexapeptide Phe-Tyr-Tyr-Thr-Gly-Tyr. Macrocyclization of asperipin-2a may accompany an alpha-hydroxylation-dehydration sequence to give an imine, which is readily hydrolyzed to yield putative ketone intermediate. The reductase aprR may be required for the final reduction to yield asperipin-2a. The polypeptide is Oxidoreductase aprR (Aspergillus flavus (strain ATCC 200026 / FGSC A1120 / IAM 13836 / NRRL 3357 / JCM 12722 / SRRC 167)).